We begin with the raw amino-acid sequence, 172 residues long: Translationally-controlled tumor protein (172 aa).

One can recognise a TCTP domain in the interval 1–172 (MIIYRDLISH…FKDGLEMEKC (172 aa)). Position 46 is a phosphoserine; by PLK1 (Ser46). Position 53 is a phosphoserine (Ser53). Ser64 is subject to Phosphoserine; by PLK1. The tract at residues 70–172 (VDIVMNHHLQ…FKDGLEMEKC (103 aa)) is required for reduction of TSC22D1 protein stability.

This sequence belongs to the TCTP family. In terms of assembly, homodimer. Interacts with STEAP3. Interacts with TSC22D1; interaction results in the destabilization of TSC22D1 protein. Found in several healthy and tumoral cells including erythrocytes, hepatocytes, macrophages, platelets, keratinocytes, erythroleukemia cells, gliomas, melanomas, hepatoblastomas, and lymphomas. It cannot be detected in kidney and renal cell carcinoma (RCC). Expressed in placenta and prostate.

It localises to the cytoplasm. Functionally, involved in calcium binding and microtubule stabilization. Acts as a negative regulator of TSC22D1-mediated apoptosis, via interaction with and destabilization of TSC22D1 protein. The protein is Translationally-controlled tumor protein (TPT1) of Homo sapiens (Human).